The chain runs to 617 residues: mRNA export factor MEX67 (617 aa).

Over residues 1–10 (MSYRGRGGGY) the composition is skewed to gly residues. The segment at 1 to 24 (MSYRGRGGGYNNNRGQFSSGPHQH) is disordered. LRR repeat units lie at residues 185–206 (DVDS…TSMA), 211–232 (KLQN…ETWR), and 237–258 (FLRE…AEIQ). The region spanning 309–499 (LATNFIANYL…MIVASDTLLI (191 aa)) is the NTF2 domain. 2 disordered regions span residues 442 to 469 (EVDG…HKRI) and 513 to 554 (LPSN…TTAD). Composition is skewed to low complexity over residues 445 to 459 (GSAS…GGSR) and 526 to 542 (ATST…TTPQ). The TAP-C domain maps to 565–617 (QIQQELLVKILLETKLNINYGIMLCEQSNWDYQQASVNFKNSAASLPSDAFVQ).

It belongs to the NXF family. Interacts with nucleoporin complex protein MTR2.

The protein localises to the nucleus. It localises to the cytoplasm. Its function is as follows. Involved in the export of mRNA from the nucleus to the cytoplasm. The chain is mRNA export factor MEX67 from Candida albicans (strain SC5314 / ATCC MYA-2876) (Yeast).